Consider the following 299-residue polypeptide: MDLSELERDNTGRCRLSSPVPPVCLKEPCVLGVDEAGRGPVLGPMVYAICYCPLSRLEDLEALKVADSKTLSESERDRLFAKMEEDGDFVGWALDVLSPNLISTSMLGRVKYNLNALSHDTATGLVQFALDQGVNVAQVFVDTVGLPETYQERLQQRFPGIEVTVKAKADALYPVVSAASICAKVARDQAVKNWKFVEKLQDLDTDYGSGYPNDPKTKAWLRKHVDPVFGFPQFVRFSWRTAQSILESEAEDVKWEDSETGDPKGPGKIKSYFSESPQTCLRLPHRYFQERGLESATVL.

Methionine 1 carries the N-acetylmethionine modification. Residues 28 to 251 form the RNase H type-2 domain; it reads PCVLGVDEAG…AQSILESEAE (224 aa). Residues aspartate 34, glutamate 35, and aspartate 142 each contribute to the a divalent metal cation site. Threonine 205 and threonine 217 each carry phosphothreonine. Residues 250–272 are disordered; that stretch reads AEDVKWEDSETGDPKGPGKIKSY. Position 258 is a phosphoserine (serine 258).

It belongs to the RNase HII family. Eukaryotic subfamily. The RNase H2 complex is a heterotrimer composed of the catalytic subunit RNASEH2A and the non-catalytic subunits RNASEH2B and RNASEH2C. It depends on Mn(2+) as a cofactor. Requires Mg(2+) as cofactor.

Its subcellular location is the nucleus. The catalysed reaction is Endonucleolytic cleavage to 5'-phosphomonoester.. In terms of biological role, catalytic subunit of RNase HII, an endonuclease that specifically degrades the RNA of RNA:DNA hybrids. Participates in DNA replication, possibly by mediating the removal of lagging-strand Okazaki fragment RNA primers during DNA replication. Mediates the excision of single ribonucleotides from DNA:RNA duplexes. The protein is Ribonuclease H2 subunit A (RNASEH2A) of Bos taurus (Bovine).